A 762-amino-acid polypeptide reads, in one-letter code: ATP-dependent RNA helicase SUV3 homolog, mitochondrial (762 aa).

Residues 1–36 (MQNTRRCISLICVTRQPPSLRATYGAVAAARCLHRA) constitute a mitochondrion transit peptide. Residues 181–321 (NARALTRKIV…ALELLQKICE (141 aa)) enclose the Helicase ATP-binding domain. 194–201 (GPTNSGKT) serves as a coordination point for ATP. The Helicase C-terminal domain maps to 331–508 (RYDRLTELTV…PTADQIELYA (178 aa)). A disordered region spans residues 716–762 (EWDAQQVGQAAAASTSSKESQESPPDDSDDEDSYPGSYKKTRRKRRK). Residues 721–730 (QVGQAAAAST) show a composition bias toward polar residues. Over residues 739 to 748 (PPDDSDDEDS) the composition is skewed to acidic residues.

It belongs to the helicase family. Mg(2+) serves as cofactor. It depends on Mn(2+) as a cofactor.

The protein resides in the mitochondrion. The catalysed reaction is ATP + H2O = ADP + phosphate + H(+). Functionally, major helicase player in mitochondrial RNA metabolism and maintenance. Likely component of the mitochondrial degradosome (mtEXO) complex, that degrades 3' overhang double-stranded RNA with a 3'-to-5' directionality in an ATP-dependent manner. ATPase and ATP-dependent multisubstrate helicase, able to unwind double-stranded (ds) DNA and RNA, and RNA/DNA heteroduplexes in the 5'-to-3' direction. Regulates mRNA stability and is required for the correct processing and maturation of mitochondrial transcripts. In Drosophila pseudoobscura pseudoobscura (Fruit fly), this protein is ATP-dependent RNA helicase SUV3 homolog, mitochondrial.